We begin with the raw amino-acid sequence, 319 residues long: Selection and upkeep of intraepithelial T-cells protein 9 (319 aa).

The first 26 residues, 1–26, serve as a signal peptide directing secretion; sequence MESSASCLPGFFMSFLLLQNTVLTQA. Positions 27 to 117 constitute an Ig-like V-type domain; it reads MRSDIKINIQ…TNQEKKRSIV (91 aa). Residues 27–139 lie on the Extracellular side of the membrane; it reads MRSDIKINIQ…LMSNKFSCPS (113 aa). A disulfide bridge links cysteine 47 with cysteine 101. A glycan (N-linked (GlcNAc...) asparagine) is linked at asparagine 105. The helical transmembrane segment at 140-160 threads the bilayer; sequence IYLITIIFLNFLRGILVFCCL. The Cytoplasmic portion of the chain corresponds to 161–183; that stretch reads RRKPVCFRNLMSTVMEALYSKMG. The chain crosses the membrane as a helical span at residues 184–204; the sequence is VCCLLIWECLLLVLYIAFLPI. Residues 205–228 lie on the Extracellular side of the membrane; it reads YVSFRSRAFLLDDTYPLYTNWLWN. A helical membrane pass occupies residues 229-249; it reads ICIILTVIMVLFPGLILCLLW. Residues 250–319 are Cytoplasmic-facing; that stretch reads TLNCYGQVSS…DDTASTLFIS (70 aa).

The protein belongs to the SKINT family. In terms of tissue distribution, expressed in skin, thymus and testis.

The protein localises to the membrane. In terms of biological role, may act by engaging a cell surface molecule on immature T-cells in the embryonic thymus. The sequence is that of Selection and upkeep of intraepithelial T-cells protein 9 (Skint9) from Mus musculus (Mouse).